Reading from the N-terminus, the 946-residue chain is Nonribosomal peptide synthetase pngA (946 aa).

Residues 32-450 are adenylation (A) domain; the sequence is AIASREPTRY…AGREKDSIIV (419 aa). Positions 580–659 constitute a Carrier domain; the sequence is QPRSGLEQSL…TLSDALKQHA (80 aa). Ser618 is subject to O-(pantetheine 4'-phosphoryl)serine. Residues 681–933 form a thioesterase (TE) domain region; sequence PIWLVHPVGG…ILDAENIFSF (253 aa).

The protein belongs to the NRP synthetase family.

The enzyme catalyses 2 3-phenylpyruvate + H(+) = phenguignardate + H2O. Its function is as follows. Nonribosomal peptide synthetase that mediates the biosynthesis of phenguignardic acid. PngA alone is sufficient for phenguignardic acid synthesis. PngA first activates phenylpyruvic acid (PPA) through its A domain to AMP-PPA. The PPA unit is then loaded to the T domain and eventually transferred to the TE domain. Another PPA unit is then loaded onto the T domain. The TE domain likely promotes the enolate formation on the attached unit, followed by a nucleophilic attack on the carbonyl to yield an ether linkage between the two units. Finally, the TE domain probably catalyzes a similar reaction to give the cyclized dioxolanone core and releases phenguignardic acid. This is Nonribosomal peptide synthetase pngA from Aspergillus terreus (strain NIH 2624 / FGSC A1156).